The primary structure comprises 251 residues: Hydroxyacylglutathione hydrolase GloB (251 aa).

Zn(2+) contacts are provided by histidine 53, histidine 55, aspartate 57, histidine 58, histidine 110, and aspartate 127. Residues 136–138 (RLF), 165–167 (HEY), and 245–248 (RSKK) contribute to the substrate site. Histidine 165 serves as a coordination point for Zn(2+).

This sequence belongs to the metallo-beta-lactamase superfamily. Glyoxalase II family. As to quaternary structure, monomer. It depends on Zn(2+) as a cofactor.

The catalysed reaction is an S-(2-hydroxyacyl)glutathione + H2O = a 2-hydroxy carboxylate + glutathione + H(+). The enzyme catalyses (R)-S-lactoylglutathione + H2O = (R)-lactate + glutathione + H(+). Its pathway is secondary metabolite metabolism; methylglyoxal degradation; (R)-lactate from methylglyoxal: step 2/2. Its activity is regulated as follows. Is inhibited by Cu(2+). Its function is as follows. Type II glyoxalase that catalyzes the hydrolysis of (R)-S-lactoylglutathione to (R)-lactate and glutathione. Is more efficient than the isozyme GloC, and plays a major contribution to methylglyoxal (MG) detoxification in E.coli. The two isoenzymes have additive effects and ensure maximal MG degradation. The protein is Hydroxyacylglutathione hydrolase GloB of Escherichia coli (strain K12).